The sequence spans 274 residues: Triosephosphate isomerase (274 aa).

31-33 (NWK) serves as a coordination point for substrate. His118 serves as the catalytic Electrophile. The active-site Proton acceptor is the Glu188. Substrate-binding positions include Gly194, Ser234, and 255 to 256 (GG).

This sequence belongs to the triosephosphate isomerase family. Homodimer.

Its subcellular location is the cytoplasm. It carries out the reaction D-glyceraldehyde 3-phosphate = dihydroxyacetone phosphate. It functions in the pathway carbohydrate biosynthesis; gluconeogenesis. It participates in carbohydrate degradation; glycolysis; D-glyceraldehyde 3-phosphate from glycerone phosphate: step 1/1. Involved in the gluconeogenesis. Catalyzes stereospecifically the conversion of dihydroxyacetone phosphate (DHAP) to D-glyceraldehyde-3-phosphate (G3P). The chain is Triosephosphate isomerase from Chlamydia trachomatis serovar A (strain ATCC VR-571B / DSM 19440 / HAR-13).